The following is a 253-amino-acid chain: Chemokine-binding protein (253 aa).

An N-terminal signal peptide occupies residues 1-17; the sequence is MKQYIVLACMCLAAAAM. Residues 62-87 form a disordered region; sequence TEITESESDPEVESEDDSTSVEDVDP. The segment covering 65-86 has biased composition (acidic residues); that stretch reads TESESDPEVESEDDSTSVEDVD.

It belongs to the orthopoxvirus OPG001 family. Binds to host CC chemokines, such as RANTES/CCL5, MIP-1alpha/CCL3, MCP-1/CCL2 and eotaxin.

The protein localises to the secreted. Functionally, inhibits host immune defense by binding to host chemokines. Binds host CC chemokines (beta chemokines) such as RANTES with high affinity, but not CXC or C chemokines (alpha and gamma chemokines). This Variola virus (isolate Human/India/Ind3/1967) (VARV) protein is Chemokine-binding protein (OPG001).